Here is a 1969-residue protein sequence, read N- to C-terminus: Protein mono-ADP-ribosyltransferase PARP4 (1969 aa).

A BRCT domain is found at 1 to 94 (MTLGIFANCI…RLLDVRNYDP (94 aa)). Residues 19 to 25 (PRQQKKK) carry the Nuclear localization signal motif. The interval 92-132 (YDPLSPAPAAPPAERSRSEVQSEYLPSDNTPEKENTEVTEV) is disordered. Residues 235-363 (SEKLQALLLE…ETNLSKPNPP (129 aa)) form the PARP alpha-helical domain. Residues 362 to 566 (PPSLAKYRAL…FCTPGDQIKE (205 aa)) form the PARP catalytic domain. The VIT domain maps to 600-728 (TNIKAGLQDA…KVLIKITYIT (129 aa)). The region spanning 869 to 1039 (EVIICLDCSS…KQIEAQMTRI (171 aa)) is the VWFA domain. At S1229 the chain carries Phosphoserine. Residues 1230–1242 (DGHGVLQPVSVSS) carry the Nuclear localization signal motif. Composition is skewed to pro residues over residues 1372-1387 (PPHPLGGTHPPPPLPL), 1402-1417 (HPPPPLFGGTLIPPPS), 1425-1444 (LPPPPPLPGGTHIPPPPPIP), 1485-1513 (LPPPPLLPAGTHIPPPPPITGSTHPPPPS), and 1521-1540 (LPPPPPLPGGTHIPPPPPIP). The tract at residues 1372–1608 (PPHPLGGTHP…AGTQFSLSPI (237 aa)) is disordered. Positions 1443–1541 (IPGGTLIPPS…HIPPPPPIPG (99 aa)) constitute an FH1 domain. The span at 1541 to 1556 (GGTLIPSPSSLFGGTH) shows a compositional bias: low complexity. Residues 1557–1585 (LPPPPLLPAGTHIPPPPPITGSTHPPPPS) show a composition bias toward pro residues. The interaction with the major vault protein stretch occupies residues 1808–1969 (FCDEDQESPV…LHRILYYSQG (162 aa)).

The protein belongs to the ARTD/PARP family. In terms of assembly, component of the vault ribonucleoprotein particle, at least composed of MVP, PARP4 and one or more vault RNAs (vRNAs). Interacts with TEP1.

It is found in the cytoplasm. Its subcellular location is the nucleus. It catalyses the reaction L-aspartyl-[protein] + NAD(+) = 4-O-(ADP-D-ribosyl)-L-aspartyl-[protein] + nicotinamide. The catalysed reaction is L-glutamyl-[protein] + NAD(+) = 5-O-(ADP-D-ribosyl)-L-glutamyl-[protein] + nicotinamide. Its function is as follows. Mono-ADP-ribosyltransferase that mediates mono-ADP-ribosylation of target proteins. This is Protein mono-ADP-ribosyltransferase PARP4 from Mus musculus (Mouse).